The following is a 146-amino-acid chain: MGRFISVSFGCLVVFLSLSGTEAVLDCPSGWLSYEQHCYKGFNDLKNWTDAEKFCTEQKKGSHLVSLHSREEEEFVVNLISENLEYPATWIGLGNMWKDCRMEWSDRGNVKYKALAEESYCLIMITHEKEWKSMTCNFIAPVVCKF.

A signal peptide spans 1 to 23 (MGRFISVSFGCLVVFLSLSGTEA). A disulfide bond links Cys27 and Cys38. The C-type lectin domain maps to 34 to 145 (YEQHCYKGFN…CNFIAPVVCK (112 aa)). N-linked (GlcNAc...) (complex) asparagine glycosylation is present at Asn47. Intrachain disulfides connect Cys55–Cys144 and Cys121–Cys136.

It belongs to the snaclec family. In terms of assembly, heterotrimer; disulfide-linked. The heterotrimer consists of 1 heavy chain (a metalloproteinase) and 2 light chains: LC1 and LC2. Post-translationally, N-glycosylated; probably required for conformation. Removal of easily accessible sugars does not change its functional capacity, but removal of the core sugars with N-glycanase causes a virtually complete loss of enzyme activity, apparently as a result of major conformational changes in the molecule. Not O-glycosylated. In terms of tissue distribution, expressed by the venom gland.

Its subcellular location is the secreted. In terms of biological role, regulatory subunit of the blood coagulation factor X- and IX-activating enzyme. The enzyme activates coagulation factor X (F10) by cleaving the Arg-Ile bond and is also able to activate coagulation factor IX (F9) and protein S (PROS1) by specific cleavage of Arg-Ile and Arg-Val bonds. May serve as an exosite by which the enzyme recognizes and binds to the Gla domain of factor X (F10) and factor IX (F9) in a calcium-dependent manner. The sequence is that of Snaclec coagulation factor X-activating enzyme light chain 1 (LC1) from Daboia siamensis (Eastern Russel's viper).